We begin with the raw amino-acid sequence, 68 residues long: Tau-scoloptoxin(04)-Ssm1b (68 aa).

The N-terminal stretch at 1-25 is a signal peptide; that stretch reads MLKSFCILSVFMVLFLAKFPDLCSG. Residues 26 to 36 constitute a propeptide that is removed on maturation; sequence EEISPLKIVVR. Cystine bridges form between Cys45–Cys56 and Cys50–Cys63. Residues 55 to 67 are highly charged C-terminal region, binds to TRPV1 channel; that stretch reads RCSIVDKQCIKKE.

Belongs to the scoloptoxin-04 family. Expressed by the venom gland.

It is found in the secreted. Its function is as follows. Extremely potent agonist and potentiator of TRPV1 (EC(50)=470-521.5 nM (mouse)). It strongly promotes the heat activation process by downshifting the activation threshold temperature. It preferably binds to the activated channel and promotes its opening. Holding the channel closed by cooling prevents binding of this toxin, leaving it ineffective. The toxin binds to the charge-rich outer pore region of the channel where it directly interacts with the pore helix and turret, two adjacent structural elements known to be critical for activation gating of TRPV1. In comparison with Sm1b, induces a TRPV1 desensitization with slower kinetics (20 seconds). In vivo, induces pain in mice after intraplantar injection. In terms of biological role, potent agonist and probable potentiator of TRPV1 (EC(50)=38.35 uM (mouse)). Also binds to the outer pore region of TRPV1. In comparison with Sm1a, induces a TRPV1 desensitization with faster kinetics (2 seconds) and leads to a more complete TRPV1 desensitization. Desensitization is achieved by reducing both the open probability and the single-channel conductance upon prolonged exposure. The polypeptide is Tau-scoloptoxin(04)-Ssm1b (Scolopendra mutilans (Chinese red-headed centipede)).